The primary structure comprises 920 residues: Androgen receptor (920 aa).

The interval 1–559 (MEVQLGLGRV…IDYYFPPQKT (559 aa)) is modulating. The segment at 1-587 (MEVQLGLGRV…GSCKVFFKRA (587 aa)) is interaction with ZNF318. 2 disordered regions span residues 36–167 (NPGP…LSLL) and 195–228 (QQQQ…YLGG). Positions 44 to 91 (AASAAPPGASLLLLQQQQQQQQQQQQQQQQQQQQQQQETSPRQQQQQQ) are enriched in low complexity. Residue serine 83 is modified to Phosphoserine; by CDK9. Position 96 is a phosphoserine (serine 96). Over residues 195–217 (QQQQQEAVSEGSSSGRAREASGA) the composition is skewed to low complexity. Positions 218 to 228 (PTSSKDNYLGG) are enriched in polar residues. Tyrosine 225 is modified (phosphotyrosine; by CSK). Phosphoserine is present on serine 258. Phosphotyrosine; by CSK and TNK2 is present on tyrosine 269. Phosphotyrosine; by CSK is present on residues tyrosine 309, tyrosine 348, tyrosine 359, and tyrosine 364. A Phosphotyrosine; by CSK and TNK2 modification is found at tyrosine 365. A Glycyl lysine isopeptide (Lys-Gly) (interchain with G-Cter in SUMO) cross-link involves residue lysine 388. Position 395 is a phosphotyrosine; by CSK (tyrosine 395). Lysine 521 participates in a covalent cross-link: Glycyl lysine isopeptide (Lys-Gly) (interchain with G-Cter in SUMO). 2 positions are modified to phosphotyrosine; by CSK: tyrosine 535 and tyrosine 552. The interval 552 to 919 (YYFPPQKTCL…GKVKPIYFHT (368 aa)) is interaction with LPXN. 2 consecutive NR C4-type zinc fingers follow at residues 560–580 (CLIC…CGSC) and 596–620 (CASR…LRKC). Residues 560–632 (CLICGDEASG…AGMTLGARKL (73 aa)) constitute a DNA-binding region (nuclear receptor). An interaction with HIPK3 region spans residues 572–662 (YGALTCGSCK…TEETTQKLTV (91 aa)). Residues 592-919 (QKYLCASRND…GKVKPIYFHT (328 aa)) form an interaction with CCAR1 region. Residues 625-919 (MTLGARKLKK…GKVKPIYFHT (295 aa)) form an interaction with KAT7 region. Phosphoserine; by STK4/MST1 is present on serine 651. Residues 669–900 (ECQPIFLNVL…DFPEMMAEII (232 aa)) enclose the NR LBD domain. 17beta-hydroxy-5alpha-androstan-3-one-binding residues include asparagine 706 and arginine 753. Residues lysine 846 and lysine 848 each participate in a glycyl lysine isopeptide (Lys-Gly) (interchain with G-Cter in ubiquitin) cross-link. Threonine 878 contributes to the 17beta-hydroxy-5alpha-androstan-3-one binding site. Tyrosine 916 is modified (phosphotyrosine; by CSK).

It belongs to the nuclear hormone receptor family. NR3 subfamily. In terms of assembly, binds DNA as a homodimer. Part of a ternary complex containing AR, EFCAB6/DJBP and PARK7. Interacts with HIPK3 and NR0B2 in the presence of androgen. The ligand binding domain interacts with KAT7/HBO1 in the presence of dihydrotestosterone. Interacts with EFCAB6/DJBP, PQBP1, RANBP9, RBAK, SPDEF, SRA1, TGFB1I1 and RREB1. Interacts with ZMIZ1/ZIMP10 and ZMIZ2/ZMIP7 which both enhance its transactivation activity. Interacts with SLC30A9 and RAD54L2/ARIP4. Interacts with MACROD1 (via macro domain). Interacts via the ligand-binding domain with LXXLL and FXXLF motifs from NCOA1, NCOA2, NCOA3 and MAGEA11. Interacts (via nuclear receptor DNA binding domain and nuclear receptor ligand binding domain) with NCOA4. The AR N-terminal poly-Gln region binds Ran resulting in enhancement of AR-mediated transactivation. Ran-binding decreases as the poly-Gln length increases. Interacts with HIP1 (via coiled coil domain). Interacts (via ligand-binding domain) with TRIM68. Interacts with TNK2. Interacts with USP26. Interacts with RNF6. Interacts (regulated by RNF6 probably through polyubiquitination) with RNF14; regulates AR transcriptional activity. Interacts with PRMT2 and TRIM24. Interacts with RACK1. Interacts with RANBP10; this interaction enhances dihydrotestosterone-induced AR transcriptional activity. Interacts with PRPF6 in a hormone-independent way; this interaction enhances dihydrotestosterone-induced AR transcriptional activity. Interacts with STK4/MST1. Interacts with ZIPK/DAPK3. Interacts with LPXN. Interacts with MAK. Part of a complex containing AR, MAK and NCOA3. Interacts with CRY1. Interacts with CCAR1 and GATA2. Interacts with ZNF318. Interacts with BUD31. Interacts with ARID4A. Interacts with ARID4B. Interacts (via NR LBD domain) with ZBTB7A; the interaction is direct and androgen-dependent. Interacts with NCOR1. Interacts with NCOR2. Interacts with CRY2 in a ligand-dependent manner. In terms of processing, sumoylated on Lys-388 (major) and Lys-521. Ubiquitinated. Deubiquitinated by USP26. 'Lys-6' and 'Lys-27'-linked polyubiquitination by RNF6 modulates AR transcriptional activity and specificity. Post-translationally, phosphorylated in prostate cancer cells in response to several growth factors including EGF. Phosphorylation is induced by c-Src kinase (CSK). Tyr-535 is one of the major phosphorylation sites and an increase in phosphorylation and Src kinase activity is associated with prostate cancer progression. Phosphorylation by TNK2 enhances the DNA-binding and transcriptional activity and may be responsible for androgen-independent progression of prostate cancer. Phosphorylation at Ser-83 by CDK9 regulates AR promoter selectivity and cell growth. Phosphorylation by PAK6 leads to AR-mediated transcription inhibition. Palmitoylated by ZDHHC7 and ZDHHC21. Palmitoylation is required for plasma membrane targeting and for rapid intracellular signaling via ERK and AKT kinases and cAMP generation. Mainly expressed in heart and skeletal muscle. As to expression, expressed in basal and stromal cells of the prostate (at protein level).

The protein resides in the nucleus. It localises to the cytoplasm. Its activity is regulated as follows. AIM-100 (4-amino-5,6-biaryl-furo[2,3-d]pyrimidine) suppresses TNK2-mediated phosphorylation at Tyr-269. Inhibits the binding of the Tyr-269 phosphorylated form to androgen-responsive enhancers (AREs) and its transcriptional activity. In terms of biological role, steroid hormone receptors are ligand-activated transcription factors that regulate eukaryotic gene expression and affect cellular proliferation and differentiation in target tissues. Transcription factor activity is modulated by bound coactivator and corepressor proteins like ZBTB7A that recruits NCOR1 and NCOR2 to the androgen response elements/ARE on target genes, negatively regulating androgen receptor signaling and androgen-induced cell proliferation. Transcription activation is also down-regulated by NR0B2. Activated, but not phosphorylated, by HIPK3 and ZIPK/DAPK3. Its function is as follows. Lacks the C-terminal ligand-binding domain and may therefore constitutively activate the transcription of a specific set of genes independently of steroid hormones. This Homo sapiens (Human) protein is Androgen receptor (AR).